We begin with the raw amino-acid sequence, 132 residues long: Small ribosomal subunit protein bS6 (132 aa).

The interval 99–132 (ASPMVKAKDERRGDRREDFANETADDADAGDSEE) is disordered. Over residues 104–117 (KAKDERRGDRREDF) the composition is skewed to basic and acidic residues. The segment covering 121–132 (TADDADAGDSEE) has biased composition (acidic residues).

Belongs to the bacterial ribosomal protein bS6 family.

In terms of biological role, binds together with bS18 to 16S ribosomal RNA. This is Small ribosomal subunit protein bS6 from Serratia proteamaculans (strain 568).